The sequence spans 225 residues: 7-cyano-7-deazaguanine synthase (225 aa).

10–20 (FSGGQDSTTLA) serves as a coordination point for ATP. 4 residues coordinate Zn(2+): Cys190, Cys205, Cys208, and Cys211.

Belongs to the QueC family. Requires Zn(2+) as cofactor.

It catalyses the reaction 7-carboxy-7-deazaguanine + NH4(+) + ATP = 7-cyano-7-deazaguanine + ADP + phosphate + H2O + H(+). It participates in purine metabolism; 7-cyano-7-deazaguanine biosynthesis. Catalyzes the ATP-dependent conversion of 7-carboxy-7-deazaguanine (CDG) to 7-cyano-7-deazaguanine (preQ(0)). This is 7-cyano-7-deazaguanine synthase from Helicobacter acinonychis (strain Sheeba).